Consider the following 542-residue polypeptide: Katanin p60 ATPase-containing subunit A-like 2 (542 aa).

The 33-residue stretch at 25 to 57 folds into the LisH domain; sequence RRKNLLILIMHYLLQEGYMDSANSLEQETKISL. Disordered stretches follow at residues 94–126 and 142–168; these read LDHD…RIAQ and HAHQ…ASEI. Positions 114 to 126 are enriched in polar residues; sequence GSNSTQGLPRIAQ. 298–305 is an ATP binding site; the sequence is GPPGTGKT.

This sequence belongs to the AAA ATPase family. Katanin p60 subunit A1 subfamily. A-like 2 sub-subfamily.

The protein resides in the cytoplasm. The protein localises to the cytoskeleton. It is found in the spindle. Its subcellular location is the spindle pole. The catalysed reaction is n ATP + n H2O + a microtubule = n ADP + n phosphate + (n+1) alpha/beta tubulin heterodimers.. Functionally, severs microtubules in vitro in an ATP-dependent manner. This activity may promote rapid reorganization of cellular microtubule arrays. The polypeptide is Katanin p60 ATPase-containing subunit A-like 2 (katnal2) (Xenopus tropicalis (Western clawed frog)).